A 134-amino-acid chain; its full sequence is Lymphocyte antigen 6A-2/6E-1 (134 aa).

A signal peptide spans 1–26 (MDTSHTTKSCLLILLVALLCAERAQG). The UPAR/Ly6 domain maps to 27 to 119 (LECYQCYGVP…NGGSTWTMAG (93 aa)). 5 cysteine pairs are disulfide-bonded: Cys-29-Cys-53, Cys-32-Cys-41, Cys-46-Cys-74, Cys-78-Cys-98, and Cys-99-Cys-104. Gly-112 carries GPI-anchor amidated glycine lipidation. Positions 113–134 (STWTMAGVLLFSLSSVLLQTLL) are cleaved as a propeptide — removed in mature form.

O-glycosylated. Not N-glycosylated. In terms of processing, not phosphorylated. In terms of tissue distribution, widely expressed.

Its subcellular location is the cell membrane. T-cell activation. This Mus musculus (Mouse) protein is Lymphocyte antigen 6A-2/6E-1 (Ly6a).